Consider the following 108-residue polypeptide: uncharacterized protein (108 aa).

One can recognise an HTH cro/C1-type domain in the interval 20 to 74 (VRQRRTALILDQETLARRIGVSFQQIQKYERGRNRISASRLYDIAKALAVPIDYF). Residues 31-50 (QETLARRIGVSFQQIQKYER) constitute a DNA-binding region (H-T-H motif).

This is an uncharacterized protein from Rhodospirillum rubrum.